Consider the following 132-residue polypeptide: Probable prefoldin subunit 4 (132 aa).

The protein belongs to the prefoldin subunit beta family. As to quaternary structure, heterohexamer of two PFD-alpha type and four PFD-beta type subunits.

In terms of biological role, binds specifically to cytosolic chaperonin (c-CPN) and transfers target proteins to it. Binds to nascent polypeptide chain and promotes folding in an environment in which there are many competing pathways for nonnative proteins. This chain is Probable prefoldin subunit 4 (pfdn4), found in Dictyostelium discoideum (Social amoeba).